A 350-amino-acid chain; its full sequence is Probable deoxyhypusine synthase (350 aa).

Residues 96–100 (SNLIS), 122–124 (TAG), Glu-128, and Asp-229 contribute to the NAD(+) site. Residue 127-128 (EE) coordinates spermidine. Asp-234 contributes to the spermidine binding site. NAD(+) is bound at residue Gly-276. Residue His-281 coordinates spermidine. 301–302 (SA) provides a ligand contact to NAD(+). Residues 307 to 309 (GSD) and 316 to 322 (EAVSWGK) each bind spermidine. The active-site Nucleophile is the Lys-322. Residue 335–336 (EV) participates in NAD(+) binding.

This sequence belongs to the deoxyhypusine synthase family. Requires NAD(+) as cofactor.

It catalyses the reaction [eIF5A protein]-L-lysine + spermidine = [eIF5A protein]-deoxyhypusine + propane-1,3-diamine. Its pathway is protein modification; eIF5A hypusination. Functionally, catalyzes the NAD-dependent oxidative cleavage of spermidine and the subsequent transfer of the butylamine moiety of spermidine to the epsilon-amino group of a specific lysine residue of the eIF-5A precursor protein to form the intermediate deoxyhypusine residue. This Schizosaccharomyces pombe (strain 972 / ATCC 24843) (Fission yeast) protein is Probable deoxyhypusine synthase.